The primary structure comprises 833 residues: Protein translocase subunit SecA (833 aa).

Residues Gln-87, 105-109, and Asp-494 contribute to the ATP site; that span reads GEGKT. The segment at 789–816 is disordered; sequence PAAVAYSGGEAEAGPAQPHREDPKVGRN. Residues 806–815 show a composition bias toward basic and acidic residues; it reads PHREDPKVGR. Residues Cys-819, Cys-821, Cys-830, and Cys-831 each contribute to the Zn(2+) site.

It belongs to the SecA family. In terms of assembly, monomer and homodimer. Part of the essential Sec protein translocation apparatus which comprises SecA, SecYEG and auxiliary proteins SecDF-YajC and YidC. Requires Zn(2+) as cofactor.

The protein localises to the cell inner membrane. The protein resides in the cytoplasm. The catalysed reaction is ATP + H2O + cellular proteinSide 1 = ADP + phosphate + cellular proteinSide 2.. Part of the Sec protein translocase complex. Interacts with the SecYEG preprotein conducting channel. Has a central role in coupling the hydrolysis of ATP to the transfer of proteins into and across the cell membrane, serving as an ATP-driven molecular motor driving the stepwise translocation of polypeptide chains across the membrane. The polypeptide is Protein translocase subunit SecA (Nitratidesulfovibrio vulgaris (strain DP4) (Desulfovibrio vulgaris)).